A 520-amino-acid chain; its full sequence is Intermediate filament protein ON3 (520 aa).

Residues 1 to 27 (MSYTKKTSYSVKSSSSGSVPRSFSSMS) show a composition bias toward low complexity. Positions 1–33 (MSYTKKTSYSVKSSSSGSVPRSFSSMSYSGPSV) are disordered. A head region spans residues 1–108 (MSYTKKTSYS…DPNIQVVRTQ (108 aa)). The tract at residues 109–144 (EKEQMKSLNNRFASFIDKVRFLEQQNKMLETKWSLL) is coil 1A. Residues 109–420 (EKEQMKSLNN…KLLEGEEDRL (312 aa)) form the IF rod domain. The tract at residues 145–157 (QNQTATRSNIDAM) is linker 1. The coil 1B stretch occupies residues 158–253 (FEAYINNLRR…QIFEEEIREL (96 aa)). The segment at 254–273 (QSQIKDTSVVVEMDNSRNLD) is linker 12. Residues 274–420 (MDAIVAEVRA…KLLEGEEDRL (147 aa)) are coil 2. Residues 421–520 (LSGIKSVNIS…VSESSEVVQD (100 aa)) are tail.

This sequence belongs to the intermediate filament family.

In terms of biological role, one of the non-neuronal predominant intermediate filament proteins of the visual pathway. The chain is Intermediate filament protein ON3 from Carassius auratus (Goldfish).